A 157-amino-acid polypeptide reads, in one-letter code: Lectin (157 aa).

A disulfide bridge connects residues cysteine 37 and cysteine 54.

In terms of assembly, homodimer. Detected in fruits (at protein level).

Its subcellular location is the secreted. Functionally, binds with high affinity specifically to chito-oligosaccharides. May play a role in plant defense against pathogens by directly binding with the chitin cell wall. Forms filamentous structures at higher concentrations and may promote wound healing by forming filaments with phloem proteins like PP1. In Coccinia grandis (Ivy gourd), this protein is Lectin.